We begin with the raw amino-acid sequence, 356 residues long: Arginine kinase 1 (356 aa).

A Phosphagen kinase N-terminal domain is found at 6 to 91 (VLAKLEEGYA…FDPIIEDYHG (86 aa)). 64-68 (GVGIY) contributes to the substrate binding site. Positions 119-356 (YVISTRVRCG…TELIKLEKSL (238 aa)) constitute a Phosphagen kinase C-terminal domain. ATP contacts are provided by residues 122–126 (STRVR) and His185. Substrate is bound at residue Glu225. Residue Arg229 coordinates ATP. Cys271 contacts substrate. Residues 280–284 (RASVH) and 309–314 (RGTRGE) contribute to the ATP site. Position 314 (Glu314) interacts with substrate.

It belongs to the ATP:guanido phosphotransferase family.

The catalysed reaction is L-arginine + ATP = N(omega)-phospho-L-arginine + ADP + H(+). In Drosophila melanogaster (Fruit fly), this protein is Arginine kinase 1.